The chain runs to 659 residues: Siderophore transporter fer7 (659 aa).

Residues Met-1–Gln-62 are disordered. Over residues Gln-31–Leu-41 the composition is skewed to polar residues. An N-linked (GlcNAc...) asparagine glycan is attached at Asn-38. The span at Asn-42–Asp-54 shows a compositional bias: basic and acidic residues. Helical transmembrane passes span Asn-79–Leu-99, Leu-121–Ala-141, Gln-150–Ala-170, Gly-208–Ile-228, Gly-245–Val-265, Leu-316–Tyr-336, Ile-348–Leu-368, and Val-379–Gly-399. The N-linked (GlcNAc...) asparagine glycan is linked to Asn-415. Helical transmembrane passes span Val-424–Leu-444 and Lys-451–Gly-471. Residue Asn-475 is glycosylated (N-linked (GlcNAc...) asparagine). 3 helical membrane passes run Thr-478–Gly-498, Ala-528–Ala-548, and Pro-590–Pro-610.

The protein belongs to the major facilitator superfamily.

The protein localises to the membrane. In terms of biological role, siderophore transporter; part of the gene cluster that mediates the biosynthesis of siderophore ferrichrome A which is contributing to organismal virulence. The protein is Siderophore transporter fer7 of Mycosarcoma maydis (Corn smut fungus).